We begin with the raw amino-acid sequence, 269 residues long: Indole-3-glycerol phosphate synthase (269 aa).

The protein belongs to the TrpC family.

It catalyses the reaction 1-(2-carboxyphenylamino)-1-deoxy-D-ribulose 5-phosphate + H(+) = (1S,2R)-1-C-(indol-3-yl)glycerol 3-phosphate + CO2 + H2O. The protein operates within amino-acid biosynthesis; L-tryptophan biosynthesis; L-tryptophan from chorismate: step 4/5. The protein is Indole-3-glycerol phosphate synthase of Saccharopolyspora erythraea (strain ATCC 11635 / DSM 40517 / JCM 4748 / NBRC 13426 / NCIMB 8594 / NRRL 2338).